The primary structure comprises 311 residues: Putative dihydroorotate dehydrogenase A (fumarate) (311 aa).

Residues Lys45, 69-73, and Asn128 contribute to the substrate site; that span reads NSMGL. 45 to 46 provides a ligand contact to FMN; sequence KT. Asn128 serves as a coordination point for FMN. Catalysis depends on Cys131, which acts as the Nucleophile. FMN contacts are provided by Lys165 and Val193. A substrate-binding site is contributed by 194–195; sequence NS. Residues Gly220, 248–249, and 270–271 contribute to the FMN site; these read GG and GT.

It belongs to the dihydroorotate dehydrogenase family. Type 1 subfamily. Homodimer. FMN is required as a cofactor.

It is found in the cytoplasm. The catalysed reaction is (S)-dihydroorotate + fumarate = orotate + succinate. It participates in pyrimidine metabolism; UMP biosynthesis via de novo pathway. Functionally, catalyzes the conversion of dihydroorotate to orotate with fumarate as the electron acceptor. The polypeptide is Putative dihydroorotate dehydrogenase A (fumarate) (pyrD) (Streptococcus pyogenes serotype M5 (strain Manfredo)).